A 273-amino-acid polypeptide reads, in one-letter code: Glutamate racemase (273 aa).

Residues 17 to 18 (DS) and 49 to 50 (YG) each bind substrate. Catalysis depends on Cys80, which acts as the Proton donor/acceptor. 81-82 (NT) provides a ligand contact to substrate. Cys190 functions as the Proton donor/acceptor in the catalytic mechanism. Residue 191 to 192 (TH) coordinates substrate.

This sequence belongs to the aspartate/glutamate racemases family.

It carries out the reaction L-glutamate = D-glutamate. It functions in the pathway cell wall biogenesis; peptidoglycan biosynthesis. Its function is as follows. Provides the (R)-glutamate required for cell wall biosynthesis. This is Glutamate racemase from Corynebacterium glutamicum (strain ATCC 13032 / DSM 20300 / JCM 1318 / BCRC 11384 / CCUG 27702 / LMG 3730 / NBRC 12168 / NCIMB 10025 / NRRL B-2784 / 534).